The sequence spans 272 residues: Type II secretion system protein C (272 aa).

Residues 1–16 are Cytoplasmic-facing; the sequence is MNISKLPPLSPSVIRR. Residues 17–35 traverse the membrane as a helical segment; the sequence is ILFYLLMLLFCQQLAMIFW. Residues 36–272 are Periplasmic-facing; the sequence is RVGLPDNSPV…DIYMEFGGDE (237 aa).

It belongs to the GSP C family.

It localises to the cell inner membrane. In terms of biological role, involved in a type II secretion system (T2SS, formerly general secretion pathway, GSP) for the export of proteins. Required for the translocation of the multiple pectic enzymes. The sequence is that of Type II secretion system protein C (outC) from Dickeya chrysanthemi (Pectobacterium chrysanthemi).